A 452-amino-acid chain; its full sequence is MNHLVLGYVGLVIGVIVTKKSMVWRVGQVGSVLLMLPATVLVNMNMTISNVSYMMTSDFVSLGLTVLSIWLLPLMLLASQQHMVSESLIYQRVFVGCQVFLTGALVLAFMASDLLLFYIAFESTLLPTLMLITRWGAQKERYQAGTYFMFFTLVGSLPLLICLIGQYQMVGSLALDLSYEGVFQLSYLVNFWWVGCILAFLVKLPLYGVHLWLPKAHVEAPIAGSMVLAGVLLKLGGYGMMRVSLMWGATAMLSSEVFLALALWGIVVMGGICLRQTDLKSLIAYSSVGHMALVVGGVLTGVAWGYNGAMVLMIAHGLVSSCLFCLANLWYERSSTRNLSGSRGLIMIFPLISSGWFLMSLMNMALPPAINLFGELVAMVALYNWSPYSIVYMSLGAVLTAAYSLYLFGMSQWGNTMKNYKNLYTITSREYLLTTLHLVPAIYLIFYLGLMF.

A run of 14 helical transmembrane segments spans residues 4–24 (LVLG…SMVW), 29–49 (VGSV…MTIS), 59–79 (FVSL…LLAS), 88–110 (LIYQ…LAFM), 114–136 (LLLF…TRWG), 144–164 (AGTY…ICLI), 182–202 (VFQL…AFLV), 221–241 (PIAG…YGMM), 252–272 (MLSS…MGGI), 282–304 (LIAY…GVAW), 309–331 (AMVL…NLWY), 345–365 (LIMI…MNMA), 390–410 (IVYM…LFGM), and 432–452 (LLTT…GLMF).

It belongs to the complex I subunit 4 family.

It localises to the mitochondrion membrane. The catalysed reaction is a ubiquinone + NADH + 5 H(+)(in) = a ubiquinol + NAD(+) + 4 H(+)(out). In terms of biological role, core subunit of the mitochondrial membrane respiratory chain NADH dehydrogenase (Complex I) that is believed to belong to the minimal assembly required for catalysis. Complex I functions in the transfer of electrons from NADH to the respiratory chain. The immediate electron acceptor for the enzyme is believed to be ubiquinone. The chain is NADH-ubiquinone oxidoreductase chain 4 (ND4) from Branchiostoma floridae (Florida lancelet).